A 421-amino-acid chain; its full sequence is GTPase Obg (421 aa).

Residues 1–158 form the Obg domain; that stretch reads MFIDVAKIEL…KTIKLELKLL (158 aa). Positions 21–40 are disordered; that stretch reads AFRREKYEPSGGPAGGDGGD. Residues 159 to 328 form the OBG-type G domain; it reads ADVGLIGLPN…LMYLIADTLD (170 aa). GTP contacts are provided by residues 165–172, 190–194, 211–214, 281–284, and 309–311; these read GLPNVGKS, FTTLE, DIPG, NKTD, and SAA. Mg(2+)-binding residues include Ser-172 and Thr-192. The 78-residue stretch at 344-421 folds into the OCT domain; that stretch reads FEEEKEPDFK…IGDVEFDFYE (78 aa).

It belongs to the TRAFAC class OBG-HflX-like GTPase superfamily. OBG GTPase family. As to quaternary structure, monomer. The cofactor is Mg(2+).

The protein resides in the cytoplasm. In terms of biological role, an essential GTPase which binds GTP, GDP and possibly (p)ppGpp with moderate affinity, with high nucleotide exchange rates and a fairly low GTP hydrolysis rate. Plays a role in control of the cell cycle, stress response, ribosome biogenesis and in those bacteria that undergo differentiation, in morphogenesis control. This chain is GTPase Obg, found in Finegoldia magna (strain ATCC 29328 / DSM 20472 / WAL 2508) (Peptostreptococcus magnus).